A 162-amino-acid polypeptide reads, in one-letter code: Crossover junction endodeoxyribonuclease RuvC (162 aa).

Catalysis depends on residues Asp-7, Glu-67, and Asp-140. Residues Asp-7, Glu-67, and Asp-140 each coordinate Mg(2+).

The protein belongs to the RuvC family. Homodimer which binds Holliday junction (HJ) DNA. The HJ becomes 2-fold symmetrical on binding to RuvC with unstacked arms; it has a different conformation from HJ DNA in complex with RuvA. In the full resolvosome a probable DNA-RuvA(4)-RuvB(12)-RuvC(2) complex forms which resolves the HJ. It depends on Mg(2+) as a cofactor.

Its subcellular location is the cytoplasm. It carries out the reaction Endonucleolytic cleavage at a junction such as a reciprocal single-stranded crossover between two homologous DNA duplexes (Holliday junction).. Functionally, the RuvA-RuvB-RuvC complex processes Holliday junction (HJ) DNA during genetic recombination and DNA repair. Endonuclease that resolves HJ intermediates. Cleaves cruciform DNA by making single-stranded nicks across the HJ at symmetrical positions within the homologous arms, yielding a 5'-phosphate and a 3'-hydroxyl group; requires a central core of homology in the junction. The consensus cleavage sequence is 5'-(A/T)TT(C/G)-3'. Cleavage occurs on the 3'-side of the TT dinucleotide at the point of strand exchange. HJ branch migration catalyzed by RuvA-RuvB allows RuvC to scan DNA until it finds its consensus sequence, where it cleaves and resolves the cruciform DNA. This is Crossover junction endodeoxyribonuclease RuvC from Heliobacterium modesticaldum (strain ATCC 51547 / Ice1).